We begin with the raw amino-acid sequence, 566 residues long: 4-hydroxy-7-methoxy-3-oxo-3,4-dihydro-2H-1,4-benzoxazin-2-yl glucoside beta-D-glucosidase 1, chloroplastic (566 aa).

The N-terminal 54 residues, M1–R54, are a transit peptide targeting the chloroplast. The tract at residues G17–C47 is disordered. Residues Q92, H196, and N244–E245 each bind a beta-D-glucoside. The active-site Proton donor is E245. A disulfide bond links C264 and C270. The segment at S325–R361 is dimerization. Y387 is a binding site for a beta-D-glucoside. 2 dimerization regions span residues N394–L405 and K450–N453. A beta-D-glucoside-binding positions include E460, W511, E518 to W519, and Y527. The active-site Nucleophile is E460.

Belongs to the glycosyl hydrolase 1 family. As to quaternary structure, homo- and heterodimer. Expressed in all seedling parts. Most abundant in the coleoptile.

It localises to the plastid. The protein resides in the chloroplast. The catalysed reaction is Hydrolysis of terminal, non-reducing beta-D-glucosyl residues with release of beta-D-glucose.. It catalyses the reaction DIMBOA beta-D-glucoside + H2O = DIMBOA + D-glucose. It carries out the reaction DIBOA beta-D-glucoside + H2O = DIBOA + D-glucose. Reversibly inhibited by micromolar concentrations of Hg(2+) or Ag(+), but irreversibly inhibited by alkylation in presence of urea. Competitive inhibition by p-nitrophenyl beta-D-thioglucoside (pNPTGlc), glucotetrazole, and para-hydroxy-S-mandelonitrile beta-glucoside (dhurrin). Functionally, is implicated in many functions such as ABA metabolism, hydrolysis of conjugated gibberellins, conversion of storage forms of cytokinins to active forms. Also acts in defense of young plant parts against pests via the production of hydroxamic acids from hydroxamic acid glucosides. Enzymatic activity is highly correlated with plant growth. The preferred substrate is DIMBOA-beta-D-glucoside. Hydrolyzes the chromogenic substrate 6-bromo-2-naphthyl-beta-D-glucoside (6BNGlc) and various artificial aryl beta-glucosides. No activity with cellobiose, arbutin, gentiobiose, linamarin or dhurrin as substrates. The sequence is that of 4-hydroxy-7-methoxy-3-oxo-3,4-dihydro-2H-1,4-benzoxazin-2-yl glucoside beta-D-glucosidase 1, chloroplastic (GLU1) from Zea mays (Maize).